The primary structure comprises 185 residues: Large ribosomal subunit protein uL5m (185 aa).

This sequence belongs to the universal ribosomal protein uL5 family.

It localises to the mitochondrion. This Brassica napus (Rape) protein is Large ribosomal subunit protein uL5m (RPL5).